The sequence spans 206 residues: Casparian strip membrane protein 1 (206 aa).

Position 2 is an N-acetylalanine (Ala-2). Topologically, residues 2–43 are cytoplasmic; that stretch reads AKESTTIDVGEPSTVTKSSSHVVKDAKKKGFVAVASRGGAKR. The chain crosses the membrane as a helical span at residues 44–64; that stretch reads GLAIFDFLLRLAAIAVTIGAA. At 65–95 the chain is on the extracellular side; the sequence is SVMYTAEETLPFFTQFLQFQAGYDDLPAFQY. The helical transmembrane segment at 96 to 116 threads the bilayer; it reads FVIAVAVVASYLVLSLPFSIV. Residues 117-127 are Cytoplasmic-facing; sequence SIVRPHAVAPR. Residues 128–148 traverse the membrane as a helical segment; it reads LILLICDTLVVTLNTSAAAAA. Topologically, residues 149–180 are extracellular; it reads ASITYLAHNGNQSTNWLPICQQFGDFCQNVST. Asn-159 and Asn-177 each carry an N-linked (GlcNAc...) asparagine glycan. The chain crosses the membrane as a helical span at residues 181–201; the sequence is AVVADSIAILFFIVLIIISAI. The Cytoplasmic portion of the chain corresponds to 202 to 206; it reads ALKRH.

This sequence belongs to the Casparian strip membrane proteins (CASP) family. In terms of assembly, homodimer and heterodimers with other CASP proteins. Interacts with CASP2, CASP3, CASP4 and CASP5.

Its subcellular location is the cell membrane. Functionally, regulates membrane-cell wall junctions and localized cell wall deposition. Required for establishment of the Casparian strip membrane domain (CSD) and the subsequent formation of Casparian strips, a cell wall modification of the root endodermis that determines an apoplastic barrier between the intraorganismal apoplasm and the extraorganismal apoplasm and prevents lateral diffusion. The sequence is that of Casparian strip membrane protein 1 (CASP1) from Arabidopsis thaliana (Mouse-ear cress).